We begin with the raw amino-acid sequence, 185 residues long: Large ribosomal subunit protein uL5 (185 aa).

It belongs to the universal ribosomal protein uL5 family. As to quaternary structure, part of the 50S ribosomal subunit; part of the 5S rRNA/L5/L18/L25 subcomplex. Contacts the 5S rRNA and the P site tRNA. Forms a bridge to the 30S subunit in the 70S ribosome.

Functionally, this is one of the proteins that bind and probably mediate the attachment of the 5S RNA into the large ribosomal subunit, where it forms part of the central protuberance. In the 70S ribosome it contacts protein S13 of the 30S subunit (bridge B1b), connecting the 2 subunits; this bridge is implicated in subunit movement. Contacts the P site tRNA; the 5S rRNA and some of its associated proteins might help stabilize positioning of ribosome-bound tRNAs. In Rhodopseudomonas palustris (strain BisA53), this protein is Large ribosomal subunit protein uL5.